The chain runs to 1626 residues: Collagen alpha-1(XXII) chain (1626 aa).

The signal sequence occupies residues 1–27 (MAGLRGNAVAGLLWMLLLWSGGGGCQA). Residues 38–213 (DLVFLLDTSS…NAIDKIRGKL (176 aa)) form the VWFA domain. The Laminin G-like domain maps to 239–427 (GTKEITGFDL…LQRIVIYCDS (189 aa)). An N-linked (GlcNAc...) asparagine glycan is attached at asparagine 375. 16 Collagen-like domains span residues 481–520 (GEKG…GDVG), 526–565 (QGEK…PGEV), 566–625 (GMRG…PGPS), 657–708 (GEQG…GIPG), 714–773 (GPPG…PGER), 774–833 (GEDG…PGLK), 868–922 (GPKG…GAPG), 925–984 (GAPG…PGKG), 1047–1095 (AGPP…PGKP), 1118–1155 (PPGP…AGPP), 1156–1215 (GLPG…AGPP), 1249–1308 (GKPG…PGKD), 1315–1374 (GPQG…PGEK), 1387–1446 (GEPG…PGPP), 1495–1550 (SQGR…PGAP), and 1575–1604 (DGLP…PPGQ). 4 disordered regions span residues 506 to 1002 (PVGA…GPLG), 1019 to 1103 (GGQC…LLSP), 1119 to 1458 (PGPP…RGES), and 1491 to 1609 (YMKS…DPSQ). Residues 544–553 (DGSKGMRGEP) show a composition bias toward basic and acidic residues. A compositionally biased stretch (pro residues) spans 571–580 (QGPPGLPGPP). Basic and acidic residues predominate over residues 591 to 606 (ERGEKGTRGEKGERGL). Positions 661–670 (APGPRGHQGA) are enriched in low complexity. 2 stretches are compositionally biased toward pro residues: residues 715–728 (PPGP…PGPG) and 742–751 (KPGPPGPTGP). 2 stretches are compositionally biased toward basic and acidic residues: residues 769–778 (EPGERGEDGL) and 815–826 (RGEKGDQGEKGE). Residues 908 to 939 (AHGAPGAAGNPGAPGHVGAPGPSGPPGSVGAP) show a composition bias toward low complexity. Residues 945–957 (PGKDGERGEKGAA) show a composition bias toward basic and acidic residues. Low complexity-rich tracts occupy residues 959-974 (EEGS…DPGA) and 1056-1065 (PGDKGSPGSR). Basic and acidic residues-rich tracts occupy residues 1131–1151 (KGDK…KKGE) and 1173–1185 (RGAD…KGDQ). Over residues 1205-1223 (ADGIAGAAGPPGIQGSPGK) the composition is skewed to low complexity. The segment covering 1241 to 1250 (EEGKEGRDGK) has biased composition (basic and acidic residues). The segment covering 1260-1275 (AGEPGLPGPEGARGPP) has biased composition (low complexity). The segment covering 1379 to 1389 (KEGVPGKPGEP) has biased composition (low complexity). Residues 1391 to 1404 (FKGERGDPGIKGDK) show a composition bias toward basic and acidic residues. A compositionally biased stretch (gly residues) spans 1405-1414 (GPPGGKGQPG). The span at 1440–1449 (VGPPGPPGQP) shows a compositional bias: pro residues. The span at 1521–1530 (GRPGQGGLEG) shows a compositional bias: gly residues. Residues 1595–1604 (LPGPPGPPGQ) are compositionally biased toward pro residues.

This sequence belongs to the fibril-associated collagens with interrupted helices (FACIT) family. As to expression, restrictive expression is observed at tissue junctions such as the myotendinous junction in skeletal and heart muscle, the articular cartilage-synovial fluid junction, or the border between the anagen hair follicle and the dermis in the skin. It is deposited in the basement membrane zone of the myotendinous junction and the hair follicle and associated with the extrafibrillar matrix in cartilage.

The protein resides in the secreted. The protein localises to the extracellular space. It is found in the extracellular matrix. Its subcellular location is the cytoplasm. Acts as a cell adhesion ligand for skin epithelial cells and fibroblasts. The protein is Collagen alpha-1(XXII) chain (COL22A1) of Homo sapiens (Human).